We begin with the raw amino-acid sequence, 157 residues long: Parasitophorous vacuole membrane protein S16 (157 aa).

A signal peptide spans 1–25 (MNIRKFIPSLALMLIFFAFANLVLS). The Extracellular portion of the chain corresponds to 26–105 (DANDKAKKPA…DKKTTVNRNL (80 aa)). Residues 30 to 74 (KAKKPAGKGSPSTLQTPGSSSGASLHAVGPNQGGLSQGLSGKDSA) are disordered. The span at 39-52 (SPSTLQTPGSSSGA) shows a compositional bias: polar residues. A helical membrane pass occupies residues 106 to 126 (IISTAVTNMIMLIILSGIVGF). The Cytoplasmic portion of the chain corresponds to 127 to 157 (KVKKTKNADDDKGDKDKDKDNTDEGDEGDDS). Residues 130–157 (KTKNADDDKGDKDKDKDNTDEGDEGDDS) form a disordered region. Positions 132–148 (KNADDDKGDKDKDKDNT) are enriched in basic and acidic residues.

It localises to the parasitophorous vacuole membrane. It is found in the vacuole. In terms of biological role, involved in male gametogenesis. Required for exflagellation of male gametocytes. May play a role in parasite transmission in the mosquito. Binds to the mosquito vector midgut. The polypeptide is Parasitophorous vacuole membrane protein S16 (Plasmodium falciparum (isolate 3D7)).